A 311-amino-acid polypeptide reads, in one-letter code: Putative tenascin-XA (311 aa).

Disordered stretches follow at residues 1-47 (MEDK…EPRL) and 124-150 (LSAE…SQLS). Fibronectin type-III domains are found at residues 41–135 (PPEE…LAPA), 145–249 (RLSQ…SPRD), and 250–311 (LQFS…SCVH).

Expressed in the adrenal gland.

This Homo sapiens (Human) protein is Putative tenascin-XA (TNXA).